The chain runs to 396 residues: Enoyl-[acyl-carrier-protein] reductase [NADH] (396 aa).

NAD(+)-binding positions include 47-52 (GASTGF), 73-74 (FE), 110-111 (DA), and 138-139 (LA). Tyr-224 contributes to the substrate binding site. Residue Tyr-234 is the Proton donor of the active site. NAD(+) contacts are provided by residues Lys-243 and 272–274 (LVT).

It belongs to the TER reductase family. As to quaternary structure, monomer.

The enzyme catalyses a 2,3-saturated acyl-[ACP] + NAD(+) = a (2E)-enoyl-[ACP] + NADH + H(+). It participates in lipid metabolism; fatty acid biosynthesis. In terms of biological role, involved in the final reduction of the elongation cycle of fatty acid synthesis (FAS II). Catalyzes the reduction of a carbon-carbon double bond in an enoyl moiety that is covalently linked to an acyl carrier protein (ACP). The sequence is that of Enoyl-[acyl-carrier-protein] reductase [NADH] from Cytophaga hutchinsonii (strain ATCC 33406 / DSM 1761 / CIP 103989 / NBRC 15051 / NCIMB 9469 / D465).